Reading from the N-terminus, the 661-residue chain is MEARVAEAAARLARQENEIKSLTAEIEHLKNFGCLGISPSLEGLRDENAKLKYRLNFLQKSLQEEQSKTVKSMININSRLQEIFGAAIQAAYPELENPPLVVTPSQQPKFGDYQCNSAMGITQILLKTKEQKVSPREIAEKITKHIPANECIEKVEIAGPGFINVHLRKDFVSKQLSSLLVNGVQPPAIGKRKKVILDFSSPNIAKEMHVGHLRSTIIGESMCRLFEFAGYDVLRLNHLGDWGTQFGMLIAHLQDRFPDYLTVSPPIGDLQAFYKESKRRFDTEEEFKKRAYQCVVLLQSKDPDFIKAWELICDVSRKEFQKIYNCLDVTLTERGESFYQDMMKDIVKEFEDKGFVQVDDGRKIVFVPGFSVPLTIMKSDGGYTYDTSDLAALRHRLLEEKGDILIYVVDSGQSVHLQTVFAAGQMIGWYDPKVTRITHAAFGVVLGEDKKKFKTRSGDTVRLMDLLEEGLKRAMDKLKDKERDKVLTPEELKAAQMSVAFGCIKYADLSHNRLNDYVFSFDKMLDDRGNTAAYLLYAFTRIRAIARLANIDEGMLRKAAREEVIVLDHEKEWKLGKCILRFPEILQKILDDLLLHTLCDYLYELATTFTEFYDNCYCVEKDRQSGQIMKVNTWRLLLCEATATIMAKGFDILGIKPVERM.

Residues 1–72 form a could be involved in the assembly of the multisynthetase complex region; that stretch reads MEARVAEAAA…QEEQSKTVKS (72 aa). L-arginine contacts are provided by residues 201-203, His-212, Tyr-385, Asp-389, and Gln-413; that span reads SPN. A 'HIGH' region motif is present at residues 202-213; that stretch reads PNIAKEMHVGHL. Positions 530–544 are interaction with tRNA; that stretch reads NTAAYLLYAFTRIRA.

The protein belongs to the class-I aminoacyl-tRNA synthetase family. In terms of assembly, monomer; also part of a multisubunit complex that groups tRNA ligases for Arg, Asp, Glu, Gln, Ile, Leu, Lys, Met and Pro.

Its subcellular location is the cytoplasm. It localises to the cytosol. The catalysed reaction is tRNA(Arg) + L-arginine + ATP = L-arginyl-tRNA(Arg) + AMP + diphosphate. In terms of biological role, forms part of a macromolecular complex that catalyzes the attachment of specific amino acids to cognate tRNAs during protein synthesis. The chain is Arginine--tRNA ligase, cytoplasmic (RARS1) from Gallus gallus (Chicken).